The chain runs to 1146 residues: Reverse gyrase 1 (1146 aa).

Residues 1–38 (MIKAIFDTLCPNCGGEISAERLLKGLPCEKCLPEEVNR) form an RG N-terminal-type zinc finger. Positions 10, 13, 28, and 31 each coordinate Zn(2+). Residues Gln-79 and 96-103 (APTGVGKT) contribute to the ATP site. The Helicase ATP-binding domain occupies 83-240 (ARKVFLGRSF…RLKEKPNKSE (158 aa)). A DEAD box motif is present at residues 197 to 200 (DDVD). One can recognise a Helicase C-terminal domain in the interval 412 to 565 (HLLWALLSLR…FKKIEEVDLK (154 aa)). Residues 592-1146 (EHVKPVLVVV…KVNEFEKANV (555 aa)) form a topoisomerase I region. One can recognise a Toprim domain in the interval 596–728 (PVLVVVESPN…NVERIEFHEV (133 aa)). Residues Glu-602 and Asp-697 each contribute to the Mg(2+) site. The 399-residue stretch at 744–1142 (NENLVKAQLV…ELYKKVNEFE (399 aa)) folds into the Topo IA-type catalytic domain. Tyr-891 serves as the catalytic O-(5'-phospho-DNA)-tyrosine intermediate.

The protein in the N-terminal section; belongs to the DEAD box helicase family. DDVD subfamily. This sequence in the C-terminal section; belongs to the type IA topoisomerase family. As to quaternary structure, monomer. Zn(2+) is required as a cofactor. Requires Mg(2+) as cofactor.

The protein localises to the cytoplasm. The catalysed reaction is ATP + H2O = ADP + phosphate + H(+). Modifies the topological state of DNA by introducing positive supercoils in an ATP-dependent process, increasing the linking number in steps of +1. Binds to single-stranded DNA, transiently cleaves and then rejoins the ends, introducing a positive supercoil in the process. The scissile phosphodiester is attacked by the catalytic tyrosine of the enzyme, resulting in the formation of a DNA-(5'-phosphotyrosyl)-enzyme intermediate. Probably involved in rewinding DNA strands in regions of the chromosome that have opened up to allow replication, transcription, DNA repair and/or for DNA protection. The protein is Reverse gyrase 1 of Aquifex aeolicus (strain VF5).